The primary structure comprises 362 residues: Glutamine synthetase (362 aa).

One can recognise a GS beta-grasp domain in the interval 26–107; the sequence is LIAEYIWIDS…VLSECWNADG (82 aa). Residues 114–362 form the GS catalytic domain; the sequence is HRHEAAKLME…METCFGAVSE (249 aa).

The protein belongs to the glutamine synthetase family. As to quaternary structure, homooctamer.

It localises to the cytoplasm. The enzyme catalyses L-glutamate + NH4(+) + ATP = L-glutamine + ADP + phosphate + H(+). This Neurospora crassa (strain ATCC 24698 / 74-OR23-1A / CBS 708.71 / DSM 1257 / FGSC 987) protein is Glutamine synthetase (gln-1).